Consider the following 417-residue polypeptide: Serine--tRNA ligase (417 aa).

232–234 contacts L-serine; it reads TAE. Residues 263-265 and V279 contribute to the ATP site; that span reads RRE. E286 provides a ligand contact to L-serine. 350–353 provides a ligand contact to ATP; it reads EISS. L-serine is bound at residue S385.

This sequence belongs to the class-II aminoacyl-tRNA synthetase family. Type-1 seryl-tRNA synthetase subfamily. Homodimer. The tRNA molecule binds across the dimer.

It is found in the cytoplasm. The catalysed reaction is tRNA(Ser) + L-serine + ATP = L-seryl-tRNA(Ser) + AMP + diphosphate + H(+). It catalyses the reaction tRNA(Sec) + L-serine + ATP = L-seryl-tRNA(Sec) + AMP + diphosphate + H(+). It participates in aminoacyl-tRNA biosynthesis; selenocysteinyl-tRNA(Sec) biosynthesis; L-seryl-tRNA(Sec) from L-serine and tRNA(Sec): step 1/1. In terms of biological role, catalyzes the attachment of serine to tRNA(Ser). Is also able to aminoacylate tRNA(Sec) with serine, to form the misacylated tRNA L-seryl-tRNA(Sec), which will be further converted into selenocysteinyl-tRNA(Sec). The protein is Serine--tRNA ligase of Leptospira borgpetersenii serovar Hardjo-bovis (strain JB197).